The following is a 208-amino-acid chain: Large ribosomal subunit protein uL4 (208 aa).

The disordered stretch occupies residues 45 to 89; that stretch reads RQGTHAHKNRSAVSGGGKKPWRQKGTGRARQGSTRSPQWRGGGTV.

Belongs to the universal ribosomal protein uL4 family. In terms of assembly, part of the 50S ribosomal subunit.

One of the primary rRNA binding proteins, this protein initially binds near the 5'-end of the 23S rRNA. It is important during the early stages of 50S assembly. It makes multiple contacts with different domains of the 23S rRNA in the assembled 50S subunit and ribosome. Functionally, forms part of the polypeptide exit tunnel. In Lactococcus lactis subsp. cremoris (strain SK11), this protein is Large ribosomal subunit protein uL4.